The sequence spans 256 residues: Imidazole glycerol phosphate synthase subunit HisF (256 aa).

Active-site residues include D11 and D130.

Belongs to the HisA/HisF family. As to quaternary structure, heterodimer of HisH and HisF.

The protein localises to the cytoplasm. The catalysed reaction is 5-[(5-phospho-1-deoxy-D-ribulos-1-ylimino)methylamino]-1-(5-phospho-beta-D-ribosyl)imidazole-4-carboxamide + L-glutamine = D-erythro-1-(imidazol-4-yl)glycerol 3-phosphate + 5-amino-1-(5-phospho-beta-D-ribosyl)imidazole-4-carboxamide + L-glutamate + H(+). It functions in the pathway amino-acid biosynthesis; L-histidine biosynthesis; L-histidine from 5-phospho-alpha-D-ribose 1-diphosphate: step 5/9. IGPS catalyzes the conversion of PRFAR and glutamine to IGP, AICAR and glutamate. The HisF subunit catalyzes the cyclization activity that produces IGP and AICAR from PRFAR using the ammonia provided by the HisH subunit. The protein is Imidazole glycerol phosphate synthase subunit HisF of Cupriavidus pinatubonensis (strain JMP 134 / LMG 1197) (Cupriavidus necator (strain JMP 134)).